The primary structure comprises 551 residues: Histone-lysine N-methyltransferase SETDB2 (551 aa).

The MBD domain occupies 146–210 (LLGHNPLRAP…DRFSFSTQVC (65 aa)). Residues 269-329 (VCCDCTDGCT…RCENRVVQKG (61 aa)) form the Pre-SET domain. Zn(2+) is bound by residues C271, C273, C277, C283, C285, C310, C314, C316, and C321. The SET domain occupies 332-537 (VRLQVFRTPE…AGTELTWSCT (206 aa)). 342 to 344 (HMW) contributes to the S-adenosyl-L-methionine binding site. A disordered region spans residues 426 to 447 (SLAQRRDQQQFSISSETEDNRC). Residues R491 and 494-495 (TH) each bind S-adenosyl-L-methionine.

This sequence belongs to the class V-like SAM-binding methyltransferase superfamily.

The protein resides in the nucleus. It is found in the chromosome. It catalyses the reaction N(6),N(6)-dimethyl-L-lysyl(9)-[histone H3] + S-adenosyl-L-methionine = N(6),N(6),N(6)-trimethyl-L-lysyl(9)-[histone H3] + S-adenosyl-L-homocysteine + H(+). In terms of biological role, histone methyltransferase involved in left-right axis specification in early development and mitosis. Specifically trimethylates 'Lys-9' of histone H3 (H3K9me3). H3K9me3 represents a specific tag for epigenetic transcriptional repression by recruiting HP1 (CBX1, CBX3 and/or CBX5) proteins to methylated histones. Contributes to H3K9me3 in both the interspersed repetitive elements and centromere-associated repeats. Plays a role in chromosome condensation and segregation during mitosis. During early development, required to specify the left-right axis by repressing expression of FGF8, leading to negatively regulate the dorsal organizer formation. The chain is Histone-lysine N-methyltransferase SETDB2 (setdb2) from Danio rerio (Zebrafish).